Here is a 596-residue protein sequence, read N- to C-terminus: SUN domain-containing protein 4 (596 aa).

Residues 28 to 48 form a helical membrane-spanning segment; the sequence is VSLSLVFLIWGLVFLSTLWIS. Disordered stretches follow at residues 58–98 and 139–158; these read LVDS…LSSD and KQSE…TTGS. The segment covering 66 to 77 has biased composition (acidic residues); the sequence is EPDDERADETAE. Composition is skewed to polar residues over residues 80 to 95 and 141 to 158; these read DATS…NPGL and SEIN…TTGS. Residues 179-343 enclose the SUN domain; it reads SNSRDKSLSG…SLLEVYGVDA (165 aa). Residues 366–396 show a composition bias toward basic and acidic residues; the sequence is DTEQKEKKTMQAKESFESDEDKSKQKEKEQE. The disordered stretch occupies residues 366–410; that stretch reads DTEQKEKKTMQAKESFESDEDKSKQKEKEQEASPENAVVKDEVSL. Residues 475 to 544 adopt a coiled-coil conformation; that stretch reads ASKREKEVET…LERLEWMEKK (70 aa). Helical transmembrane passes span 545–565 and 576–596; these read GVVV…AVVF and GGLA…ILSL.

As to quaternary structure, forms homomers and heteromers with SUN3. Interacts with SUN1, SUN2 and TIK.

Its subcellular location is the nucleus membrane. It is found in the endoplasmic reticulum membrane. Functionally, encodes a member of the mid-SUN subfamily of SUN-domain proteins that is localized to both the nuclear envelope and the ER. It is involved in early seed development and nuclear morphology. [TAIR]. The sequence is that of SUN domain-containing protein 4 from Arabidopsis thaliana (Mouse-ear cress).